We begin with the raw amino-acid sequence, 302 residues long: Sulfate adenylyltransferase subunit 2 (302 aa).

It belongs to the PAPS reductase family. CysD subfamily. In terms of assembly, heterodimer composed of CysD, the smaller subunit, and CysN.

It carries out the reaction sulfate + ATP + H(+) = adenosine 5'-phosphosulfate + diphosphate. It participates in sulfur metabolism; hydrogen sulfide biosynthesis; sulfite from sulfate: step 1/3. Functionally, with CysN forms the ATP sulfurylase (ATPS) that catalyzes the adenylation of sulfate producing adenosine 5'-phosphosulfate (APS) and diphosphate, the first enzymatic step in sulfur assimilation pathway. APS synthesis involves the formation of a high-energy phosphoric-sulfuric acid anhydride bond driven by GTP hydrolysis by CysN coupled to ATP hydrolysis by CysD. This Shigella boydii serotype 4 (strain Sb227) protein is Sulfate adenylyltransferase subunit 2.